The sequence spans 428 residues: GTPase Obg (428 aa).

The Obg domain occupies M1–L158. Positions A159 to E328 constitute an OBG-type G domain. GTP-binding positions include G165–S172, F190–T194, D212–G215, T282–D285, and S309–V311. Residues S172 and T192 each coordinate Mg(2+). The OCT domain maps to Y350–D428.

The protein belongs to the TRAFAC class OBG-HflX-like GTPase superfamily. OBG GTPase family. As to quaternary structure, monomer. Requires Mg(2+) as cofactor.

It is found in the cytoplasm. An essential GTPase which binds GTP, GDP and possibly (p)ppGpp with moderate affinity, with high nucleotide exchange rates and a fairly low GTP hydrolysis rate. Plays a role in control of the cell cycle, stress response, ribosome biogenesis and in those bacteria that undergo differentiation, in morphogenesis control. This is GTPase Obg from Lactobacillus gasseri (strain ATCC 33323 / DSM 20243 / BCRC 14619 / CIP 102991 / JCM 1131 / KCTC 3163 / NCIMB 11718 / NCTC 13722 / AM63).